Here is a 40-residue protein sequence, read N- to C-terminus: Beta-glucosidase 1 (40 aa).

The enzyme catalyses Hydrolysis of terminal, non-reducing beta-D-glucosyl residues with release of beta-D-glucose.. In Passalora fulva (Tomato leaf mold), this protein is Beta-glucosidase 1.